Reading from the N-terminus, the 189-residue chain is Protein sisterless A (189 aa).

The disordered stretch occupies residues 93–124; the sequence is DCRGSGSGSGSGSGSDVKDAQRQRAESCRKSR. Over residues 108-121 the composition is skewed to basic and acidic residues; the sequence is DVKDAQRQRAESCR.

As to quaternary structure, homodimer. Interacts with dpn (via bHLH motif). Interacts with da (via bHLH motif). Interacts with Bap60. Localizes to all the embryonic nuclei until nuclear cycle 9, when expression ceases in the prepole cell nuclei. Associates with the somatic nuclei through cycle 10. By nuclear cycle 12, distributes uniformly in the somatic portion of the embryo and no longer associates with the nuclei. After early cycle 14 (beginning of cellularization) there is very little or no expression in the periphery of the embryo or in either the somatic or germ cells. In the yolk, accumulates at the nuclei from nuclear cycle 8 until 10-11 hours after fertilization.

It localises to the nucleus. Its function is as follows. Involved in sex determination and dosage compensation. Required for proper expression of Sxl in embryonic somatic cells. Also has an essential function in the yolk nuclei. Involved in endoderm migration and midgut formation. The polypeptide is Protein sisterless A (sisA) (Drosophila melanogaster (Fruit fly)).